A 292-amino-acid polypeptide reads, in one-letter code: Pyridoxal 5'-phosphate synthase subunit PdxS (292 aa).

A D-ribose 5-phosphate-binding site is contributed by aspartate 22. Lysine 79 serves as the catalytic Schiff-base intermediate with D-ribose 5-phosphate. Glycine 151 is a binding site for D-ribose 5-phosphate. A D-glyceraldehyde 3-phosphate-binding site is contributed by arginine 163. Residues glycine 212 and 233-234 contribute to the D-ribose 5-phosphate site; that span reads GS.

It belongs to the PdxS/SNZ family. In the presence of PdxT, forms a dodecamer of heterodimers.

The enzyme catalyses aldehydo-D-ribose 5-phosphate + D-glyceraldehyde 3-phosphate + L-glutamine = pyridoxal 5'-phosphate + L-glutamate + phosphate + 3 H2O + H(+). Its pathway is cofactor biosynthesis; pyridoxal 5'-phosphate biosynthesis. Functionally, catalyzes the formation of pyridoxal 5'-phosphate from ribose 5-phosphate (RBP), glyceraldehyde 3-phosphate (G3P) and ammonia. The ammonia is provided by the PdxT subunit. Can also use ribulose 5-phosphate and dihydroxyacetone phosphate as substrates, resulting from enzyme-catalyzed isomerization of RBP and G3P, respectively. The protein is Pyridoxal 5'-phosphate synthase subunit PdxS of Ruminiclostridium cellulolyticum (strain ATCC 35319 / DSM 5812 / JCM 6584 / H10) (Clostridium cellulolyticum).